Consider the following 180-residue polypeptide: Large ribosomal subunit protein uL5 (180 aa).

It belongs to the universal ribosomal protein uL5 family. As to quaternary structure, part of the 50S ribosomal subunit; part of the 5S rRNA/L5/L18/L25 subcomplex. Contacts the 5S rRNA and the P site tRNA. Forms a bridge to the 30S subunit in the 70S ribosome.

This is one of the proteins that bind and probably mediate the attachment of the 5S RNA into the large ribosomal subunit, where it forms part of the central protuberance. In the 70S ribosome it contacts protein S13 of the 30S subunit (bridge B1b), connecting the 2 subunits; this bridge is implicated in subunit movement. Contacts the P site tRNA; the 5S rRNA and some of its associated proteins might help stabilize positioning of ribosome-bound tRNAs. The chain is Large ribosomal subunit protein uL5 from Streptococcus sanguinis (strain SK36).